The following is a 90-amino-acid chain: Envelope protein US9 (90 aa).

Over Met-1–Met-67 the chain is Intravirion. Residues Tyr-21–Ala-24 carry the Internalization motif motif. The acidic stretch occupies residues Glu-30–Glu-39. 2 positions are modified to phosphoserine; by host CK2: Ser-34 and Ser-36. Residues Val-68–Leu-88 form a helical; Signal-anchor for type II membrane protein membrane-spanning segment. The Virion surface portion of the chain corresponds to Leu-89 to Arg-90.

It belongs to the alphaherpesvirinae envelope protein US9 family. Post-translationally, phosphorylated on serines within the acidic cluster, possibly by host CK2. Phosphorylation determines whether endocytosed viral US9 traffics to the trans-Golgi network or recycles to the cell membrane.

Its subcellular location is the virion membrane. The protein resides in the host Golgi apparatus membrane. It is found in the host smooth endoplasmic reticulum membrane. The protein localises to the host cell membrane. Functionally, essential for the anterograde spread of the infection throughout the host nervous system. Together with the gE/gI heterodimer, US9 is involved in the sorting and transport of viral structural components toward axon tips. This Homo sapiens (Human) protein is Envelope protein US9.